The chain runs to 493 residues: Monodehydroascorbate reductase, chloroplastic/mitochondrial (493 aa).

A chloroplast and mitochondrion-targeting transit peptide spans 1–51 (MSAVRRVMALASTTLPTKSGLSLWCPSSPSLARRFPARFSPIGSRIASRSL). FAD-binding positions include 68 to 71 (GGNA), E95, R102, K107, and 201 to 202 (RE). NAD(+) is bound by residues 224 to 230 (GGYIGME), E248, R254, and G313. 226–230 (YIGME) serves as a coordination point for NADP(+). R254 and G313 together coordinate NADP(+). Residue D351 participates in FAD binding. 367–368 (EH) contacts NAD(+). 367 to 368 (EH) contributes to the NADP(+) binding site. V369 provides a ligand contact to FAD. R373 contributes to the L-ascorbate binding site. Residue Y398 participates in FAD binding. Y398 is an NAD(+) binding site. NADP(+) is bound at residue Y398. An L-ascorbate-binding site is contributed by R400.

It belongs to the FAD-dependent oxidoreductase family. Interacts in vitro with TRXy. FAD is required as a cofactor.

It localises to the plastid. The protein localises to the chloroplast. It is found in the mitochondrion. It carries out the reaction 2 monodehydro-L-ascorbate radical + NADH + H(+) = 2 L-ascorbate + NAD(+). The catalysed reaction is 2,4,6-trinitrotoluene + NADH = 2,4,6-trinitrotoluene radical + e(-) + NAD(+). Redox regulation of the activity by thioredoxin TRXy1. Functionally, catalyzes the conversion of monodehydroascorbate (MDA) to ascorbate, oxidizing NADH in the process. Mediates phytotoxicity of 2,4,6-trinitrotoluene (TNT), an explosive and environmental pollutant, by reducing TNT and forming a nitro radical that spontaneously reacts with atmospheric oxygen, generating reactive superoxide. Can also use 1-chloro-2,4-dinitrobenzene (CDNB) as substrate, but not 1-chloro-4-nitrobenzene (CNB). The polypeptide is Monodehydroascorbate reductase, chloroplastic/mitochondrial (Arabidopsis thaliana (Mouse-ear cress)).